We begin with the raw amino-acid sequence, 237 residues long: Lectin alpha chain (237 aa).

Residues Glu-8 and Asp-10 each contribute to the Mn(2+) site. Positions 10, 12, 14, and 19 each coordinate Ca(2+). Tyr-12 is an a carbohydrate binding site. Mn(2+) is bound by residues Asp-19, His-24, and Ser-34. 99–100 (LY) is a binding site for a carbohydrate. Position 208 (Asp-208) interacts with Ca(2+). Arg-228 serves as a coordination point for a carbohydrate.

Belongs to the leguminous lectin family. As to quaternary structure, equilibrium between homodimer and homotetramer. Oligomerization is pH-dependent with homotetramers forming at pH 6.5 and above. The beta and gamma chains are produced by partial proteolytic processing of the lectin alpha chain by an asparaginyl endopeptidase. Mixture of 60% alpha lectin and 40% of its beta and gamma proteolytic fragments.

Its function is as follows. D-mannose/D-glucose-binding lectin. Has anti-inflammatory activity in rats. Induces histamine release in mast cells from rat. Induces lymphocyte proliferation and IFNG production. The polypeptide is Lectin alpha chain (Dioclea guianensis).